The following is a 419-amino-acid chain: Subtilisin-like protease 2 (419 aa).

Residues 1-16 (MQLLNFGLLLLPFVAG) form the signal peptide. The propeptide occupies 17-122 (DLAPQPEPLL…VHPDQHVYLA (106 aa)). The region spanning 36 to 122 (QYIVTLKEGL…VHPDQHVYLA (87 aa)) is the Inhibitor I9 domain. The Peptidase S8 domain maps to 131 to 419 (RWGLGYMSSK…IQERKFKLPK (289 aa)). Active-site charge relay system residues include aspartate 169 and histidine 201. Asparagine 248, asparagine 261, and asparagine 348 each carry an N-linked (GlcNAc...) asparagine glycan. The active-site Charge relay system is the serine 357. N-linked (GlcNAc...) asparagine glycosylation occurs at asparagine 388.

It belongs to the peptidase S8 family.

The protein localises to the secreted. Functionally, secreted subtilisin-like serine protease with keratinolytic activity that contributes to pathogenicity. The chain is Subtilisin-like protease 2 (SUB2) from Trichophyton verrucosum (Cattle ringworm fungus).